The following is a 538-amino-acid chain: MYGGDDFGNTDFYDDYAHTGDPQLDMEYERTFYANRMPDNVKFFLMNFCQAIKEGNLYDIQNMYENTFPQISDHHFDKSAWPEEQEVGAIVDNDKVFLILYKELYYRHIHARIPGGPKLEQRINSFFNYCDFFNLIISSQNPVMLELPDIWLWELVDEFVYQFQNFAQYRARLTDKSQDEIQQLCVNHSNVWSILCILNVLHSLVDISNIKKQLEAISQGIDPQTVAGDFGKLGFYKMLGYFSLVGLLRVHSLLGDYYQAIKVLEPIEIHKKSAYSHIPACQISTSYYVGFAYMMMRRYADAIRTFSDILLYIQRTKQLYSTRSYQNDQINKQAEQMYHLLAICLVLHPQCIDESIQQVLREKNYHDAMFKMQCGDLEVFKSFFVFACPRFVSPCPPAADAPMEDYVKDPMEHQLLVFMDEVRQQKDLPTTRSYLKLYTTLPLTKLASFIDPNASEDDVSKLLIRLLCFKHKMRNLVWSKGPSGLEGTFKSGSELDFYIDDDMIHIADTKVSHRYGDFFVRKIMKFNDLNRKLKNINI.

A PCI domain is found at threonine 305–histidine 513.

This sequence belongs to the eIF-3 subunit L family. As to quaternary structure, component of the eukaryotic translation initiation factor 3 (eIF-3) complex. The eIF-3 complex interacts with pix.

The protein resides in the cytoplasm. In terms of biological role, component of the eukaryotic translation initiation factor 3 (eIF-3) complex, which is involved in protein synthesis of a specialized repertoire of mRNAs and, together with other initiation factors, stimulates binding of mRNA and methionyl-tRNAi to the 40S ribosome. The eIF-3 complex specifically targets and initiates translation of a subset of mRNAs involved in cell proliferation. This chain is Eukaryotic translation initiation factor 3 subunit L, found in Drosophila mojavensis (Fruit fly).